A 517-amino-acid polypeptide reads, in one-letter code: Amidophosphoribosyltransferase (517 aa).

An N-acetylmethionine modification is found at M1. Residues 1–11 (MELEELGIREE) constitute a propeptide that is removed on maturation. C12 serves as the catalytic Nucleophile. Positions 12–261 (CGVFGCIASG…PGEIVEISRH (250 aa)) constitute a Glutamine amidotransferase type-2 domain. C280 is a [4Fe-4S] cluster binding site. 3 residues coordinate Mg(2+): S327, D389, and D390. The [4Fe-4S] cluster site is built by C426, C503, and C506.

This sequence in the C-terminal section; belongs to the purine/pyrimidine phosphoribosyltransferase family. Homotetramer. Requires Mg(2+) as cofactor. It depends on [4Fe-4S] cluster as a cofactor. In terms of tissue distribution, ubiquitously expressed.

It catalyses the reaction 5-phospho-beta-D-ribosylamine + L-glutamate + diphosphate = 5-phospho-alpha-D-ribose 1-diphosphate + L-glutamine + H2O. It participates in purine metabolism; IMP biosynthesis via de novo pathway; N(1)-(5-phospho-D-ribosyl)glycinamide from 5-phospho-alpha-D-ribose 1-diphosphate: step 1/2. Functionally, catalyzes the formation of phosphoribosylamine from phosphoribosylpyrophosphate (PRPP) and glutamine. The sequence is that of Amidophosphoribosyltransferase (PPAT) from Homo sapiens (Human).